A 619-amino-acid chain; its full sequence is Chaperone protein DnaK (619 aa).

The residue at position 175 (T175) is a Phosphothreonine; by autocatalysis. A disordered region spans residues 578 to 619 (NGGAQGEGFDPNNMGGANAGTGAANSNDDNVVDADFEVQDDK). Positions 589–606 (NNMGGANAGTGAANSNDD) are enriched in low complexity. Residues 607–619 (NVVDADFEVQDDK) are compositionally biased toward acidic residues.

This sequence belongs to the heat shock protein 70 family.

Acts as a chaperone. In Clostridium perfringens (strain SM101 / Type A), this protein is Chaperone protein DnaK.